A 248-amino-acid polypeptide reads, in one-letter code: tRNA pseudouridine synthase A (248 aa).

Catalysis depends on D52, which acts as the Nucleophile. Y113 provides a ligand contact to substrate.

The protein belongs to the tRNA pseudouridine synthase TruA family. In terms of assembly, homodimer.

It catalyses the reaction uridine(38/39/40) in tRNA = pseudouridine(38/39/40) in tRNA. Formation of pseudouridine at positions 38, 39 and 40 in the anticodon stem and loop of transfer RNAs. The protein is tRNA pseudouridine synthase A of Mesorhizobium japonicum (strain LMG 29417 / CECT 9101 / MAFF 303099) (Mesorhizobium loti (strain MAFF 303099)).